Here is a 729-residue protein sequence, read N- to C-terminus: MTDFDKIFEGAIPEGKEPVALFREVYHGAITATSYAEILLNQAIRTYGPDHPVGYPDTAYYLPVIRCFSGEEVKKLGDLPPILNRKRAQVSPVLNFENARLAGEATWYAAEIIEALRYLKYKPDEPLLPPPWTGFIGDPVVRRFGIKMVDWTIPGEAIILGRAKDSKALAKIVKELMGMGFMLFICDEAVEQLLEENVKLGIDYIAYPLGNFTQIVHAANYALRAGMMFGGVTPGAREEQRDYQRRRIRAFVLYLGEHDMVKTAAAFGAIFTGFPVITDQPLPEDKQIPDWFFSVEDYDKIVQIAMETRGIKLTKIKLDLPINFGPAFEGESIRKGDMYVEMGGNRTPAFELVRTVSESEITDGKIEVIGPDIDQIPEGSKLPLGILVDIYGRKMQADFEGVLERRIHDFINYGEGLWHTGQRNINWLRVSKDAVAKGFRFKNYGEILVAKMKEEFPAIVDRVQVTIFTDEAKVKEYMEVAREKYKERDDRMRGLTDETVDTFYSCVLCQSFAPNHVCIVTPERVGLCGAVSWLDAKASYEINHAGPNQPIPKEGEIDPIKGIWKSVNDYLYTASNRNLEQVCLYTLMENPMTSCGCFEAIMAILPECNGIMITTRDHAGMTPSGMTFSTLAGMIGGGTQTPGFMGIGRTYIVSKKFISADGGIARIVWMPKSLKDFLHDEFVRRSVEEGLGEDFIDKIADETIGTTVDEILPYLEEKGHPALTMDPIM.

4 residues coordinate [4Fe-4S] cluster: cysteine 506, cysteine 509, cysteine 518, and cysteine 528. Residue cysteine 509 coordinates Ni(2+). The Ni(2+) site is built by cysteine 595, glycine 596, and cysteine 597.

In terms of assembly, tetramer of two alpha and two beta chains. Requires Ni cation as cofactor. It depends on [4Fe-4S] cluster as a cofactor.

It carries out the reaction Co(I)-[corrinoid Fe-S protein] + acetyl-CoA + H(+) = methyl-Co(III)-[corrinoid Fe-S protein] + CO + CoA. Its function is as follows. The beta subunit generates CO from CO(2), while the alpha subunit (this protein) combines the CO with CoA and a methyl group to form acetyl-CoA. The methyl group, which is incorporated into acetyl-CoA, is transferred to the alpha subunit by a corrinoid iron-sulfur protein. This Moorella thermoacetica (Clostridium thermoaceticum) protein is Carbon monoxide dehydrogenase/acetyl-CoA synthase subunit alpha.